Reading from the N-terminus, the 282-residue chain is Protein-export membrane protein SecF (282 aa).

The next 6 helical transmembrane spans lie at 16-36 (MVAL…FNTV), 126-146 (QAIW…FVAF), 148-168 (IFIP…ITAA), 169-189 (FMDV…LMLI), 221-241 (GIIM…VFSL), and 253-273 (VLII…AGLL).

It belongs to the SecD/SecF family. SecF subfamily. In terms of assembly, part of the protein translocation apparatus. Forms a complex with SecD.

The protein resides in the cell membrane. Involved in protein export. The sequence is that of Protein-export membrane protein SecF from Methanolacinia petrolearia (strain DSM 11571 / OCM 486 / SEBR 4847) (Methanoplanus petrolearius).